Here is a 318-residue protein sequence, read N- to C-terminus: Trans-prenyltransferase (318 aa).

The chain crosses the membrane as a helical span at residues 1–21; sequence MLHLIYISIIVVLIIILISYT. Positions 85, 88, and 122 each coordinate isopentenyl diphosphate. Aspartate 129 and aspartate 135 together coordinate Mg(2+). Arginine 140 lines the dimethylallyl diphosphate pocket. Position 141 (arginine 141) interacts with isopentenyl diphosphate. Residues lysine 216, threonine 217, and glutamine 254 each contribute to the dimethylallyl diphosphate site.

It belongs to the FPP/GGPP synthase family. Asfivirus trans-prenyltransferase subfamily. It depends on Mg(2+) as a cofactor.

The protein resides in the host endoplasmic reticulum. The protein localises to the host membrane. It catalyses the reaction isopentenyl diphosphate + dimethylallyl diphosphate = (2E)-geranyl diphosphate + diphosphate. It carries out the reaction isopentenyl diphosphate + (2E)-geranyl diphosphate = (2E,6E)-farnesyl diphosphate + diphosphate. The catalysed reaction is isopentenyl diphosphate + (2E,6E)-farnesyl diphosphate = (2E,6E,10E)-geranylgeranyl diphosphate + diphosphate. The enzyme catalyses isopentenyl diphosphate + (2E,6E,10E)-geranylgeranyl diphosphate = (2E,6E,10E,14E)-geranylfarnesyl diphosphate + diphosphate. Its pathway is isoprenoid biosynthesis; farnesyl diphosphate biosynthesis; farnesyl diphosphate from geranyl diphosphate and isopentenyl diphosphate: step 1/1. The protein operates within isoprenoid biosynthesis; geranyl diphosphate biosynthesis; geranyl diphosphate from dimethylallyl diphosphate and isopentenyl diphosphate: step 1/1. It functions in the pathway isoprenoid biosynthesis; geranylgeranyl diphosphate biosynthesis; geranylgeranyl diphosphate from farnesyl diphosphate and isopentenyl diphosphate: step 1/1. Its function is as follows. Trans-prenyltransferase that catalyzes the sequential condensation of isopentenyl diphosphate (IPP) with different allylic diphosphates, such as dimethylallyl diphosphate (DMAPP), geranyl diphosphate (GPP), farnesyl diphosphate (FPP) and geranylgeranyl diphosphate (GGPP), farnesyl diphosphate being the best allylic substrate. This is Trans-prenyltransferase from African swine fever virus (isolate Tick/South Africa/Pretoriuskop Pr4/1996) (ASFV).